Consider the following 204-residue polypeptide: GATA transcription factor 14 (204 aa).

Over residues 57-66 (REFDTNDSKP) the composition is skewed to basic and acidic residues. Residues 57-102 (REFDTNDSKPSRNFSNLPTATRGRLHAPKRSGNKRGRQKRLSFKSP) are disordered. Positions 79–98 (GRLHAPKRSGNKRGRQKRLS) are enriched in basic residues. The GATA-type zinc finger occupies 111–165 (GITDKSCSHCGTRKTPLWREGPRGAGTLCNACGMRYRTGRLLPEYRPASSPDFKP). The segment at 180-204 (RERKSSPPNSFGFSESYHSTRKLGF) is disordered. Polar residues predominate over residues 185 to 196 (SPPNSFGFSESY).

It belongs to the type IV zinc-finger family. Class A subfamily.

Its subcellular location is the nucleus. Transcriptional activator that specifically binds 5'-GATA-3' or 5'-GAT-3' motifs within gene promoters. May be involved in the regulation of some light-responsive genes. The chain is GATA transcription factor 14 (GATA14) from Arabidopsis thaliana (Mouse-ear cress).